We begin with the raw amino-acid sequence, 302 residues long: Plant UBX domain-containing protein 3 (302 aa).

Disordered stretches follow at residues 1 to 64 and 79 to 98; these read MSSK…PKHD and VEGP…TGRL. Residues 113 to 177 form the SEP domain; sequence PVIHNIIFWS…NLMRRDEKCP (65 aa). The region spanning 224–301 is the UBX domain; that stretch reads ETLPSTSIQL…GLASSVVIQK (78 aa).

Interacts with CDC48A.

The sequence is that of Plant UBX domain-containing protein 3 from Arabidopsis thaliana (Mouse-ear cress).